The following is a 634-amino-acid chain: Chaperone protein dnaK2 (634 aa).

Threonine 197 bears the Phosphothreonine; by autocatalysis mark. The segment at isoleucine 592–aspartate 634 is disordered. The segment covering aspartate 622 to aspartate 634 has biased composition (acidic residues).

This sequence belongs to the heat shock protein 70 family.

In terms of biological role, acts as a chaperone. This Prochlorococcus marinus subsp. pastoris (strain CCMP1986 / NIES-2087 / MED4) protein is Chaperone protein dnaK2 (dnaK2).